The following is a 700-amino-acid chain: Mei4-dependent protein 6 (700 aa).

Kelch repeat units follow at residues 276 to 322 (CIYL…MVID), 327 to 381 (KLYL…FDHG), 390 to 439 (IVYV…KIER), 452 to 499 (KLYI…FCQR), 508 to 558 (RIFT…SRFG), and 569 to 619 (IIYL…RFHE).

In Schizosaccharomyces pombe (strain 972 / ATCC 24843) (Fission yeast), this protein is Mei4-dependent protein 6 (mde6).